The chain runs to 663 residues: Beta-galactosidase BgaH (663 aa).

Arg-103 is a substrate binding site. Zn(2+) is bound at residue Cys-107. Substrate is bound at residue Asn-141. The active-site Proton donor is Glu-142. Residues Cys-151, Cys-153, and Cys-156 each coordinate Zn(2+). The active-site Nucleophile is the Glu-311. Substrate-binding positions include Trp-319 and 359–362 (EQYH).

It belongs to the glycosyl hydrolase 42 family. Homodimer.

The enzyme catalyses Hydrolysis of terminal non-reducing beta-D-galactose residues in beta-D-galactosides.. Its activity is regulated as follows. Requires 4 M NaCl for maximal activity. Loss of activity if DTT or beta-mercaptoethanol is omitted from buffers. Addition of 5-20 mM EDTA, 1 mM Cu(2+) or 1 mM Zn(2+) results in loss of activity. Its function is as follows. When overexpressed, cleaves several different substrates including o-nitrophenyl-beta-D-galactopyranoside (ONPG), chromogen 5-bromo-4-chloro-3-indolyl-beta-D-galactopyranoside (X-Gal) and lactulose, but not lactose. Also has beta-D-fucosidase activity. No beta-L-fucosidase, beta-glucosidase, beta-arabinosidase or beta-xylosidase activity. The sequence is that of Beta-galactosidase BgaH from Haloferax lucentense (strain DSM 14919 / JCM 9276 / NCIMB 13854 / Aa 2.2) (Haloferax alicantei).